Here is a 311-residue protein sequence, read N- to C-terminus: Aspartate carbamoyltransferase catalytic subunit (311 aa).

Positions 55 and 56 each coordinate carbamoyl phosphate. K84 contributes to the L-aspartate binding site. 3 residues coordinate carbamoyl phosphate: R105, H133, and Q136. The L-aspartate site is built by R166 and R229. Positions 268 and 269 each coordinate carbamoyl phosphate.

This sequence belongs to the aspartate/ornithine carbamoyltransferase superfamily. ATCase family. In terms of assembly, heterododecamer (2C3:3R2) of six catalytic PyrB chains organized as two trimers (C3), and six regulatory PyrI chains organized as three dimers (R2).

The enzyme catalyses carbamoyl phosphate + L-aspartate = N-carbamoyl-L-aspartate + phosphate + H(+). The protein operates within pyrimidine metabolism; UMP biosynthesis via de novo pathway; (S)-dihydroorotate from bicarbonate: step 2/3. Its function is as follows. Catalyzes the condensation of carbamoyl phosphate and aspartate to form carbamoyl aspartate and inorganic phosphate, the committed step in the de novo pyrimidine nucleotide biosynthesis pathway. In Alkaliphilus metalliredigens (strain QYMF), this protein is Aspartate carbamoyltransferase catalytic subunit.